A 169-amino-acid polypeptide reads, in one-letter code: S-ribosylhomocysteine lyase (169 aa).

Fe cation-binding residues include His54, His58, and Cys128.

It belongs to the LuxS family. As to quaternary structure, homodimer. Fe cation serves as cofactor.

It catalyses the reaction S-(5-deoxy-D-ribos-5-yl)-L-homocysteine = (S)-4,5-dihydroxypentane-2,3-dione + L-homocysteine. Involved in the synthesis of autoinducer 2 (AI-2) which is secreted by bacteria and is used to communicate both the cell density and the metabolic potential of the environment. The regulation of gene expression in response to changes in cell density is called quorum sensing. Catalyzes the transformation of S-ribosylhomocysteine (RHC) to homocysteine (HC) and 4,5-dihydroxy-2,3-pentadione (DPD). This chain is S-ribosylhomocysteine lyase, found in Shewanella sp. (strain MR-7).